A 550-amino-acid chain; its full sequence is Chaperonin GroEL 2 (550 aa).

ATP is bound by residues 30 to 33 (TLGP), K51, 87 to 91 (DGTTT), G415, and D496.

The protein belongs to the chaperonin (HSP60) family. As to quaternary structure, forms a cylinder of 14 subunits composed of two heptameric rings stacked back-to-back. Interacts with the co-chaperonin GroES.

It is found in the cytoplasm. It catalyses the reaction ATP + H2O + a folded polypeptide = ADP + phosphate + an unfolded polypeptide.. Its function is as follows. Together with its co-chaperonin GroES, plays an essential role in assisting protein folding. The GroEL-GroES system forms a nano-cage that allows encapsulation of the non-native substrate proteins and provides a physical environment optimized to promote and accelerate protein folding. This is Chaperonin GroEL 2 from Bradyrhizobium diazoefficiens (strain JCM 10833 / BCRC 13528 / IAM 13628 / NBRC 14792 / USDA 110).